Consider the following 367-residue polypeptide: Molybdenum import ATP-binding protein ModC (367 aa).

The 234-residue stretch at 1–234 (MSSAALEVRL…PALSGGFGHE (234 aa)) folds into the ABC transporter domain. 33-40 (GPSGAGKS) lines the ATP pocket. The Mop domain maps to 293-366 (HISLHNILPV…IKSVAVDVLG (74 aa)).

The protein belongs to the ABC transporter superfamily. Molybdate importer (TC 3.A.1.8) family. As to quaternary structure, the complex is composed of two ATP-binding proteins (ModC), two transmembrane proteins (ModB) and a solute-binding protein (ModA).

The protein resides in the cell inner membrane. The catalysed reaction is molybdate(out) + ATP + H2O = molybdate(in) + ADP + phosphate + H(+). Its function is as follows. Part of the ABC transporter complex ModABC involved in molybdenum import. Responsible for energy coupling to the transport system. The sequence is that of Molybdenum import ATP-binding protein ModC from Granulibacter bethesdensis (strain ATCC BAA-1260 / CGDNIH1).